The following is a 415-amino-acid chain: Squalene synthase 10 (415 aa).

2 helical membrane passes run alanine 281–phenylalanine 301 and leucine 392–proline 412.

The protein belongs to the phytoene/squalene synthase family. Mg(2+) is required as a cofactor. Mn(2+) serves as cofactor.

It is found in the endoplasmic reticulum membrane. The catalysed reaction is 2 (2E,6E)-farnesyl diphosphate + NADH + H(+) = squalene + 2 diphosphate + NAD(+). The enzyme catalyses 2 (2E,6E)-farnesyl diphosphate + NADPH + H(+) = squalene + 2 diphosphate + NADP(+). The protein operates within terpene metabolism; lanosterol biosynthesis; lanosterol from farnesyl diphosphate: step 1/3. Its function is as follows. Component of the triterpene saponins (e.g. ginsenosides or panaxosides) and phytosterols biosynthetic pathways. Catalyzes the biosynthesis of squalene. In Panax ginseng (Korean ginseng), this protein is Squalene synthase 10.